Reading from the N-terminus, the 287-residue chain is Cis-prenyltransferase 7, chloroplastic (287 aa).

The N-terminal 34 residues, 1 to 34 (MLSLGFSLPPPSDNKLIITNNNQYNYRTNLANVC), are a transit peptide targeting the chloroplast. The active site involves Asp-61.

This sequence belongs to the UPP synthase family. Mg(2+) is required as a cofactor. Expressed in leaf trichomes and stem trichomes.

The protein localises to the plastid. Its subcellular location is the chloroplast. Uses geranylgeranyl diphosphate to catalyze the cis-prenyl chain elongation and produce polyprenyl diphosphate with a chain of 35 carbons. The protein is Cis-prenyltransferase 7, chloroplastic of Solanum lycopersicum (Tomato).